Here is a 196-residue protein sequence, read N- to C-terminus: Probable GTP-binding protein EngB (196 aa).

The region spanning 22–195 (NIPEIALVGR…WQWIEERMGK (174 aa)) is the EngB-type G domain. Residues 30–37 (GRSNVGKS), 57–61 (GKTQT), 75–78 (DVPG), 142–145 (TKID), and 174–176 (FSA) each bind GTP. The Mg(2+) site is built by S37 and T59.

Belongs to the TRAFAC class TrmE-Era-EngA-EngB-Septin-like GTPase superfamily. EngB GTPase family. The cofactor is Mg(2+).

Its function is as follows. Necessary for normal cell division and for the maintenance of normal septation. This is Probable GTP-binding protein EngB from Limosilactobacillus reuteri (strain DSM 20016) (Lactobacillus reuteri).